A 333-amino-acid polypeptide reads, in one-letter code: Phosphoenolpyruvate transferase (333 aa).

Aspartate 65 contacts 7,8-didemethyl-8-hydroxy-5-deazariboflavin.

This sequence belongs to the CofD family. As to quaternary structure, homodimer. Mg(2+) is required as a cofactor.

The catalysed reaction is enolpyruvoyl-2-diphospho-5'-guanosine + 7,8-didemethyl-8-hydroxy-5-deazariboflavin = dehydro coenzyme F420-0 + GMP + H(+). It participates in cofactor biosynthesis; coenzyme F420 biosynthesis. In terms of biological role, catalyzes the transfer of the phosphoenolpyruvate moiety from enoylpyruvoyl-2-diphospho-5'-guanosine (EPPG) to 7,8-didemethyl-8-hydroxy-5-deazariboflavin (FO) with the formation of dehydro coenzyme F420-0 and GMP. This is Phosphoenolpyruvate transferase from Mycobacterium leprae (strain TN).